Here is a 561-residue protein sequence, read N- to C-terminus: Arginine--tRNA ligase (561 aa).

The 'HIGH' region motif lies at 129 to 139; that stretch reads ANPTGPLHVGH.

The protein belongs to the class-I aminoacyl-tRNA synthetase family. Monomer.

The protein localises to the cytoplasm. The catalysed reaction is tRNA(Arg) + L-arginine + ATP = L-arginyl-tRNA(Arg) + AMP + diphosphate. The sequence is that of Arginine--tRNA ligase from Bordetella petrii (strain ATCC BAA-461 / DSM 12804 / CCUG 43448).